The sequence spans 657 residues: tRNA 5-methylaminomethyl-2-thiouridine biosynthesis bifunctional protein MnmC (657 aa).

A tRNA (mnm(5)s(2)U34)-methyltransferase region spans residues 1–236; it reads MPDRLVPATL…KRAMLVGEYA (236 aa). The FAD-dependent cmnm(5)s(2)U34 oxidoreductase stretch occupies residues 261–657; the sequence is IGAGVAGCAV…LRARQVSAAD (397 aa).

The protein in the N-terminal section; belongs to the methyltransferase superfamily. tRNA (mnm(5)s(2)U34)-methyltransferase family. This sequence in the C-terminal section; belongs to the DAO family. Requires FAD as cofactor.

The protein localises to the cytoplasm. The catalysed reaction is 5-aminomethyl-2-thiouridine(34) in tRNA + S-adenosyl-L-methionine = 5-methylaminomethyl-2-thiouridine(34) in tRNA + S-adenosyl-L-homocysteine + H(+). In terms of biological role, catalyzes the last two steps in the biosynthesis of 5-methylaminomethyl-2-thiouridine (mnm(5)s(2)U) at the wobble position (U34) in tRNA. Catalyzes the FAD-dependent demodification of cmnm(5)s(2)U34 to nm(5)s(2)U34, followed by the transfer of a methyl group from S-adenosyl-L-methionine to nm(5)s(2)U34, to form mnm(5)s(2)U34. This chain is tRNA 5-methylaminomethyl-2-thiouridine biosynthesis bifunctional protein MnmC, found in Burkholderia multivorans (strain ATCC 17616 / 249).